Consider the following 231-residue polypeptide: Nuclear transcription factor Y subunit C-9 (231 aa).

Positions 211-231 are disordered; sequence NPYMGQPMWQQQAPDQPDQEN.

Belongs to the NFYC/HAP5 subunit family. In terms of assembly, heterotrimeric transcription factor composed of three components, NF-YA, NF-YB and NF-YC. Interacts with NFYA2, NFYB2, CO and RGA. Interacts with REF6 (via N-terminus). In terms of tissue distribution, ubiquitous. Present in etiolated seedlings.

Its subcellular location is the nucleus. In terms of biological role, stimulates the transcription of various genes by recognizing and binding to a CCAAT motif in promoters. Interacts with REF6 to directly regulate SOC1 transcription in response to flowering signals from photoperiod and gibberellic acid pathways. This chain is Nuclear transcription factor Y subunit C-9 (NFYC9), found in Arabidopsis thaliana (Mouse-ear cress).